A 271-amino-acid chain; its full sequence is MTSLTSADALTLYGETFASRVLIGTSRYPSLQSLSDSIAASRPGMVTVALRRQMTGGTAEAGFFDLLKRHAVPLLPNTAGCQTVAEAVTTAHMAREVFGTDWIKLELIGDDYTLQPDPVGLIEAAAQLVKDGFKVLPYCTEDLVIGRRLLDVGCEALMPWGAPIGTGKGVVNPYGLRVLRERLPDVPLIVDAGLGVPSHACQVMEWGFDGVLLNTAVSQATHPEIMARAFAQGVEAGRAAYLAGPMDARETAHASTPVVGMPFWHQDGGGA.

Residue Lys-104 is the Schiff-base intermediate with DXP of the active site. Residues Gly-165, 192–193 (AG), and 214–215 (NT) contribute to the 1-deoxy-D-xylulose 5-phosphate site.

This sequence belongs to the ThiG family. As to quaternary structure, homotetramer. Forms heterodimers with either ThiH or ThiS.

Its subcellular location is the cytoplasm. The catalysed reaction is [ThiS sulfur-carrier protein]-C-terminal-Gly-aminoethanethioate + 2-iminoacetate + 1-deoxy-D-xylulose 5-phosphate = [ThiS sulfur-carrier protein]-C-terminal Gly-Gly + 2-[(2R,5Z)-2-carboxy-4-methylthiazol-5(2H)-ylidene]ethyl phosphate + 2 H2O + H(+). The protein operates within cofactor biosynthesis; thiamine diphosphate biosynthesis. Its function is as follows. Catalyzes the rearrangement of 1-deoxy-D-xylulose 5-phosphate (DXP) to produce the thiazole phosphate moiety of thiamine. Sulfur is provided by the thiocarboxylate moiety of the carrier protein ThiS. In vitro, sulfur can be provided by H(2)S. This chain is Thiazole synthase, found in Burkholderia lata (strain ATCC 17760 / DSM 23089 / LMG 22485 / NCIMB 9086 / R18194 / 383).